We begin with the raw amino-acid sequence, 1158 residues long: ATP-dependent helicase/deoxyribonuclease subunit B (1158 aa).

8 to 15 (GRAGTGKS) lines the ATP pocket. 4 residues coordinate [4Fe-4S] cluster: Cys-791, Cys-1112, Cys-1115, and Cys-1121.

The protein belongs to the helicase family. AddB/RexB type 1 subfamily. In terms of assembly, heterodimer of AddA and AddB. Requires Mg(2+) as cofactor. [4Fe-4S] cluster serves as cofactor.

Its function is as follows. The heterodimer acts as both an ATP-dependent DNA helicase and an ATP-dependent, dual-direction single-stranded exonuclease. Recognizes the chi site generating a DNA molecule suitable for the initiation of homologous recombination. The AddB subunit has 5' -&gt; 3' nuclease activity but not helicase activity. The chain is ATP-dependent helicase/deoxyribonuclease subunit B from Clostridium perfringens (strain 13 / Type A).